A 330-amino-acid chain; its full sequence is DNA-directed RNA polymerase subunit alpha (330 aa).

The interval 1 to 236 is alpha N-terminal domain (alpha-NTD); it reads MQGSVTEFLK…EQLDAFVDLR (236 aa). Residues 250–330 form an alpha C-terminal domain (alpha-CTD) region; that stretch reads FDPILLRPVD…NWPPASIAED (81 aa).

It belongs to the RNA polymerase alpha chain family. Homodimer. The RNAP catalytic core consists of 2 alpha, 1 beta, 1 beta' and 1 omega subunit. When a sigma factor is associated with the core the holoenzyme is formed, which can initiate transcription.

The catalysed reaction is RNA(n) + a ribonucleoside 5'-triphosphate = RNA(n+1) + diphosphate. Functionally, DNA-dependent RNA polymerase catalyzes the transcription of DNA into RNA using the four ribonucleoside triphosphates as substrates. This chain is DNA-directed RNA polymerase subunit alpha, found in Vibrio vulnificus (strain CMCP6).